The following is an 836-amino-acid chain: Probable serine/threonine-protein kinase dyrk1 (836 aa).

Residues 99 to 278 are compositionally biased toward low complexity; sequence QQQYQQQHNN…SSNNNNNNKQ (180 aa). Residues 99 to 286 are disordered; the sequence is QQQYQQQHNN…KQSKYNDGYD (188 aa). The 321-residue stretch at 304–624 folds into the Protein kinase domain; the sequence is FEIISSLGKG…PLEALQHSFF (321 aa). ATP-binding positions include 310–318 and Lys333; that span reads LGKGSFGQV. Catalysis depends on Asp432, which acts as the Proton acceptor. 3 disordered regions span residues 627–697, 718–767, and 785–836; these read DETS…QQQQ, TYSP…INSN, and NIYN…NNNI. Low complexity predominate over residues 630-697; that stretch reads SQPPQQQSQQ…QQLQQQQQQQ (68 aa). Over residues 718–728 the composition is skewed to polar residues; it reads TYSPTTQQSNH. Residues 729 to 744 are compositionally biased toward basic and acidic residues; the sequence is KLVDQMKKASMKDKSP. The segment covering 785–816 has biased composition (low complexity); that stretch reads NIYNNNNNNNNNNNNNNNNNNSNNYNNSNELS.

It belongs to the protein kinase superfamily. CMGC Ser/Thr protein kinase family. MNB/DYRK subfamily.

It catalyses the reaction L-seryl-[protein] + ATP = O-phospho-L-seryl-[protein] + ADP + H(+). The catalysed reaction is L-threonyl-[protein] + ATP = O-phospho-L-threonyl-[protein] + ADP + H(+). It carries out the reaction L-tyrosyl-[protein] + ATP = O-phospho-L-tyrosyl-[protein] + ADP + H(+). The protein is Probable serine/threonine-protein kinase dyrk1 (dyrk1) of Dictyostelium discoideum (Social amoeba).